A 92-amino-acid chain; its full sequence is YcgL domain-containing protein Shewana3_2381 (92 aa).

Positions 1-85 constitute a YcgL domain; sequence MLCAVYKSSR…PQVNLLAEHR (85 aa).

The sequence is that of YcgL domain-containing protein Shewana3_2381 from Shewanella sp. (strain ANA-3).